The primary structure comprises 309 residues: MDPRCTMGLAILIFVTVLLISDAVSVETQAYFNGTAYLPCPFTKAQNISLSELVVFWQDQQKLVLYEHYLGTEKLDSVNAKYLGRTSFDRNNWTLRLHNVQIKDMGSYDCFIQKKPPTGSIILQQTLTELSVIANFSEPEIKLAQNVTGNSGINLTCTSKQGHPKPKKMYFLITNSTNEYGDNMQISQDNVTELFSISNSLSLSFPDGVWHMTVVCVLETESMKISSKPLNFTQEFPSPQTYWKEITASVTVALLLVMLLIIVCHKKPNQPSRPSNTASKLERDSNADRETINLKELEPQIASAKPNAE.

An N-terminal signal peptide occupies residues 1–23 (MDPRCTMGLAILIFVTVLLISDA). Residues 24–244 (VSVETQAYFN…EFPSPQTYWK (221 aa)) lie on the Extracellular side of the membrane. Residues Asn33, Asn47, Asn92, Asn135, Asn146, Asn154, Asn175, Asn190, and Asn231 are each glycosylated (N-linked (GlcNAc...) asparagine). The region spanning 33–128 (NGTAYLPCPF…GSIILQQTLT (96 aa)) is the Ig-like V-type domain. Residues Cys40 and Cys110 are joined by a disulfide bond. The region spanning 150–223 (NSGINLTCTS…VVCVLETESM (74 aa)) is the Ig-like C2-type domain. An intrachain disulfide couples Cys157 to Cys216. A helical transmembrane segment spans residues 245 to 265 (EITASVTVALLLVMLLIIVCH). The Cytoplasmic portion of the chain corresponds to 266–309 (KKPNQPSRPSNTASKLERDSNADRETINLKELEPQIASAKPNAE). Residues 269 to 279 (NQPSRPSNTAS) show a composition bias toward polar residues. The segment at 269-309 (NQPSRPSNTASKLERDSNADRETINLKELEPQIASAKPNAE) is disordered. Residues 280–298 (KLERDSNADRETINLKELE) are compositionally biased toward basic and acidic residues.

Homodimer. Interacts with MARCH8. Interacts (via cytoplasmic domain) with PHB1 and PHB2; the interactions increases after priming with CD40. Interacts with CD28. Polyubiquitinated; which is promoted by MARCH8 and results in endocytosis and lysosomal degradation. As to expression, expressed on activated B-cells.

The protein resides in the cell membrane. In terms of biological role, receptor involved in the costimulatory signal essential for T-lymphocyte proliferation and interleukin-2 production, by binding CD28 or CTLA-4. May play a critical role in the early events of T-cell activation and costimulation of naive T-cells, such as deciding between immunity and anergy that is made by T-cells within 24 hours after activation. Also involved in the regulation of B cells function, plays a role in regulating the level of IgG(1) produced. Upon CD40 engagement, activates NF-kappa-B signaling pathway via phospholipase C and protein kinase C activation. The chain is T-lymphocyte activation antigen CD86 (Cd86) from Mus musculus (Mouse).